The sequence spans 726 residues: Delta-1-pyrroline-5-carboxylate synthase B (726 aa).

Residues 1–296 (MTEIDRSRAF…WAPVVDTTSR (296 aa)) form a glutamate 5-kinase region. Serine 60, aspartate 157, and asparagine 176 together coordinate substrate. ATP is bound by residues 196 to 197 (SD) and 236 to 242 (RGGMTAK). The gamma-glutamyl phosphate reductase stretch occupies residues 297–717 (DMAVAARESS…YTHKDLPVLQ (421 aa)).

The protein in the N-terminal section; belongs to the glutamate 5-kinase family. This sequence in the C-terminal section; belongs to the gamma-glutamyl phosphate reductase family.

The enzyme catalyses L-glutamate + ATP = L-glutamyl 5-phosphate + ADP. The catalysed reaction is L-glutamate 5-semialdehyde + phosphate + NADP(+) = L-glutamyl 5-phosphate + NADPH + H(+). The protein operates within amino-acid biosynthesis; L-proline biosynthesis; L-glutamate 5-semialdehyde from L-glutamate: step 1/2. It participates in amino-acid biosynthesis; L-proline biosynthesis; L-glutamate 5-semialdehyde from L-glutamate: step 2/2. Functionally, P5CS plays a key role in proline biosynthesis, leading to osmoregulation in plants. The chain is Delta-1-pyrroline-5-carboxylate synthase B (P5CSB) from Arabidopsis thaliana (Mouse-ear cress).